Here is a 517-residue protein sequence, read N- to C-terminus: N-acetylglucosamine-1-phosphodiester alpha-N-acetylglucosaminidase (517 aa).

Positions 1 to 25 are cleaved as a signal peptide; that stretch reads MAAPRGPGLFLIPALLGLLGVAWCS. Positions 26 to 49 are cleaved as a propeptide — removed in mature form; that stretch reads LSFGVSRDDDLLLPYPLARRRPSR. The tract at residues 49–75 is disordered; sequence RDCARVRSGSPEQESWPPPPTNPGASH. Residues 50-453 lie on the Lumenal side of the membrane; that stretch reads DCARVRSGSP…ASFTRTTWLA (404 aa). Cystine bridges form between Cys-116-Cys-149, Cys-133-Cys-324, Cys-308-Cys-315, Cys-363-Cys-374, and Cys-381-Cys-390. Residues Asn-215 and Asn-297 are each glycosylated (N-linked (GlcNAc...) asparagine). Residues 359–391 form the EGF-like domain; the sequence is SELDCGPSNCSQHGLCTETGCHCDAGWTGSNCS. Asn-367, Asn-389, and Asn-421 each carry an N-linked (GlcNAc...) asparagine glycan. The chain crosses the membrane as a helical span at residues 454–474; that stretch reads LTLTLIFLLLISTGVNVSLFL. Topologically, residues 475 to 517 are cytoplasmic; that stretch reads GSRAERNRHLDGDYVYHPLQEVNGEALTAEKEHMEETSNPFKD. Residues 488-491 carry the Tyrosine-based internalization motif motif; sequence YVYH. Residues 488-495 are mediates the interaction with AP4M1; that stretch reads YVYHPLQE. An NPF internalization motif motif is present at residues 511-515; the sequence is TSNPF.

As to quaternary structure, homotetramer arranged as two disulfide-linked homodimers. Interacts with AP4M1. The precursor is cleaved and activated in the trans-Golgi network by a furin endopeptidase.

Its subcellular location is the golgi apparatus. It localises to the golgi stack membrane. The protein localises to the trans-Golgi network. The catalysed reaction is N(4)-[6-(N-acetyl-alpha-D-glucosaminyl-1-phospho)-alpha-D-mannosyl-(1-&gt;2)-alpha-D-mannosyl-(glycan)]-L-asparaginyl-[protein] + H2O = N(4)-[6-phospho-alpha-D-mannosyl-(1-&gt;2)-alpha-D-mannosyl-(glycan)]-L-asparaginyl-[protein] + N-acetyl-D-glucosamine + H(+). The protein operates within protein modification; protein glycosylation. Catalyzes the second step in the formation of the mannose 6-phosphate targeting signal on lysosomal enzyme oligosaccharides by removing GlcNAc residues from GlcNAc-alpha-P-mannose moieties, which are formed in the first step. Also hydrolyzes UDP-GlcNAc, a sugar donor for Golgi N-acetylglucosaminyltransferases. The protein is N-acetylglucosamine-1-phosphodiester alpha-N-acetylglucosaminidase (Nagpa) of Mus musculus (Mouse).